Reading from the N-terminus, the 366-residue chain is Ribosomal RNA large subunit methyltransferase M (366 aa).

S-adenosyl-L-methionine-binding positions include Ser188, 221-224 (CPGG), Asp240, Asp260, and Asp277. Lys306 functions as the Proton acceptor in the catalytic mechanism.

Belongs to the class I-like SAM-binding methyltransferase superfamily. RNA methyltransferase RlmE family. RlmM subfamily. As to quaternary structure, monomer.

It localises to the cytoplasm. It carries out the reaction cytidine(2498) in 23S rRNA + S-adenosyl-L-methionine = 2'-O-methylcytidine(2498) in 23S rRNA + S-adenosyl-L-homocysteine + H(+). Functionally, catalyzes the 2'-O-methylation at nucleotide C2498 in 23S rRNA. The sequence is that of Ribosomal RNA large subunit methyltransferase M from Shigella boydii serotype 4 (strain Sb227).